Here is a 376-residue protein sequence, read N- to C-terminus: Glucose-1-phosphate adenylyltransferase (376 aa).

Alpha-D-glucose 1-phosphate contacts are provided by residues tyrosine 101, glycine 166, 181–182 (EK), and serine 192.

The protein belongs to the bacterial/plant glucose-1-phosphate adenylyltransferase family. Homotetramer.

The enzyme catalyses alpha-D-glucose 1-phosphate + ATP + H(+) = ADP-alpha-D-glucose + diphosphate. The protein operates within glycan biosynthesis; glycogen biosynthesis. Its function is as follows. Involved in the biosynthesis of ADP-glucose, a building block required for the elongation reactions to produce glycogen. Catalyzes the reaction between ATP and alpha-D-glucose 1-phosphate (G1P) to produce pyrophosphate and ADP-Glc. The protein is Glucose-1-phosphate adenylyltransferase of Bacillus cereus (strain ATCC 14579 / DSM 31 / CCUG 7414 / JCM 2152 / NBRC 15305 / NCIMB 9373 / NCTC 2599 / NRRL B-3711).